Consider the following 259-residue polypeptide: Imidazole glycerol phosphate synthase subunit HisF (259 aa).

Active-site residues include Asp11 and Asp130.

The protein belongs to the HisA/HisF family. In terms of assembly, heterodimer of HisH and HisF.

It localises to the cytoplasm. The enzyme catalyses 5-[(5-phospho-1-deoxy-D-ribulos-1-ylimino)methylamino]-1-(5-phospho-beta-D-ribosyl)imidazole-4-carboxamide + L-glutamine = D-erythro-1-(imidazol-4-yl)glycerol 3-phosphate + 5-amino-1-(5-phospho-beta-D-ribosyl)imidazole-4-carboxamide + L-glutamate + H(+). It participates in amino-acid biosynthesis; L-histidine biosynthesis; L-histidine from 5-phospho-alpha-D-ribose 1-diphosphate: step 5/9. IGPS catalyzes the conversion of PRFAR and glutamine to IGP, AICAR and glutamate. The HisF subunit catalyzes the cyclization activity that produces IGP and AICAR from PRFAR using the ammonia provided by the HisH subunit. The sequence is that of Imidazole glycerol phosphate synthase subunit HisF from Chloroflexus aurantiacus (strain ATCC 29366 / DSM 635 / J-10-fl).